The primary structure comprises 220 residues: Probable cutinase 5 (220 aa).

A signal peptide spans 1–18 (MVALHTLLLTAFAAVSLA). 2 disulfides stabilise this stretch: Cys42–Cys121 and Cys68–Cys82. Residue Ser132 is the Nucleophile of the active site. Cys183 and Cys190 are disulfide-bonded. Residue Asp187 is part of the active site. The active-site Proton donor/acceptor is the His200.

It belongs to the cutinase family.

Its subcellular location is the secreted. It catalyses the reaction cutin + H2O = cutin monomers.. In terms of biological role, catalyzes the hydrolysis of complex carboxylic polyesters found in the cell wall of plants. Degrades cutin, a macromolecule that forms the structure of the plant cuticle. The chain is Probable cutinase 5 from Aspergillus terreus (strain NIH 2624 / FGSC A1156).